Reading from the N-terminus, the 379-residue chain is L-lactate dehydrogenase (379 aa).

The region spanning 1–379 (MIISASTDYR…IGRDSLVSLP (379 aa)) is the FMN hydroxy acid dehydrogenase domain. A substrate-binding site is contributed by Y24. Positions 106 and 127 each coordinate FMN. Y129 provides a ligand contact to substrate. FMN is bound at residue T155. R164 contacts substrate. K251 serves as a coordination point for FMN. The active-site Proton acceptor is the H275. R278 lines the substrate pocket. Residue 306–330 (DSGIRTGLDVVRMLALGADTVLLGR) participates in FMN binding.

The protein belongs to the FMN-dependent alpha-hydroxy acid dehydrogenase family. FMN is required as a cofactor.

The protein localises to the cell inner membrane. It carries out the reaction (S)-lactate + A = pyruvate + AH2. In terms of biological role, catalyzes the conversion of L-lactate to pyruvate. Is coupled to the respiratory chain. The sequence is that of L-lactate dehydrogenase from Stenotrophomonas maltophilia (strain K279a).